A 176-amino-acid polypeptide reads, in one-letter code: dCTP deaminase (176 aa).

Residues 99 to 104 (RSTLAR) and D115 contribute to the dCTP site. E125 serves as the catalytic Proton donor/acceptor. Q163 provides a ligand contact to dCTP.

It belongs to the dCTP deaminase family. Homotrimer.

It carries out the reaction dCTP + H2O + H(+) = dUTP + NH4(+). Its pathway is pyrimidine metabolism; dUMP biosynthesis; dUMP from dCTP (dUTP route): step 1/2. In terms of biological role, catalyzes the deamination of dCTP to dUTP. The sequence is that of dCTP deaminase from Pyrobaculum islandicum (strain DSM 4184 / JCM 9189 / GEO3).